A 348-amino-acid chain; its full sequence is Elongation factor Ts (348 aa).

Residues Thr80–Val83 form an involved in Mg(2+) ion dislocation from EF-Tu region.

Belongs to the EF-Ts family.

Its subcellular location is the cytoplasm. Functionally, associates with the EF-Tu.GDP complex and induces the exchange of GDP to GTP. It remains bound to the aminoacyl-tRNA.EF-Tu.GTP complex up to the GTP hydrolysis stage on the ribosome. This is Elongation factor Ts from Streptococcus mutans serotype c (strain ATCC 700610 / UA159).